The primary structure comprises 119 residues: Holo-[acyl-carrier-protein] synthase (119 aa).

Positions 8 and 58 each coordinate Mg(2+).

Belongs to the P-Pant transferase superfamily. AcpS family. It depends on Mg(2+) as a cofactor.

Its subcellular location is the cytoplasm. It catalyses the reaction apo-[ACP] + CoA = holo-[ACP] + adenosine 3',5'-bisphosphate + H(+). In terms of biological role, transfers the 4'-phosphopantetheine moiety from coenzyme A to a Ser of acyl-carrier-protein. This chain is Holo-[acyl-carrier-protein] synthase, found in Bacillus cytotoxicus (strain DSM 22905 / CIP 110041 / 391-98 / NVH 391-98).